The sequence spans 105 residues: MSQPNMNDIMAQAQRMQKQLQEAQAEIVASSIVGEAGNGKVTLVLSGGGEVQDLKIDQEVVDPEDVETLQDLIIGAFQDANQKLQDLAQEKMGPLADLGGGGLPF.

Belongs to the YbaB/EbfC family. Homodimer.

The protein resides in the cytoplasm. The protein localises to the nucleoid. Binds to DNA and alters its conformation. May be involved in regulation of gene expression, nucleoid organization and DNA protection. This Corynebacterium urealyticum (strain ATCC 43042 / DSM 7109) protein is Nucleoid-associated protein cu1912.